A 250-amino-acid chain; its full sequence is Flavin-dependent thymidylate synthase (250 aa).

Positions 7–233 (LSVELIACSS…PTVFGDFEIE (227 aa)) constitute a ThyX domain. DUMP contacts are provided by residues 92–95 (ELVR), 103–107 (QLSQR), and Arg172. FAD is bound by residues 95 to 97 (RHR) and Gln103. The short motif at 95 to 105 (RHRHFSFSQLS) is the ThyX motif element. FAD contacts are provided by residues 188-190 (NFR) and His194. Arg199 serves as a coordination point for dUMP. Arg199 acts as the Involved in ionization of N3 of dUMP, leading to its activation in catalysis.

The protein belongs to the thymidylate synthase ThyX family. In terms of assembly, homotetramer. FAD serves as cofactor.

The catalysed reaction is dUMP + (6R)-5,10-methylene-5,6,7,8-tetrahydrofolate + NADPH + H(+) = dTMP + (6S)-5,6,7,8-tetrahydrofolate + NADP(+). Its pathway is pyrimidine metabolism; dTTP biosynthesis. Catalyzes the reductive methylation of 2'-deoxyuridine-5'-monophosphate (dUMP) to 2'-deoxythymidine-5'-monophosphate (dTMP) while utilizing 5,10-methylenetetrahydrofolate (mTHF) as the methyl donor, and NADPH and FADH(2) as the reductant. This chain is Flavin-dependent thymidylate synthase, found in Corynebacterium glutamicum (strain ATCC 13032 / DSM 20300 / JCM 1318 / BCRC 11384 / CCUG 27702 / LMG 3730 / NBRC 12168 / NCIMB 10025 / NRRL B-2784 / 534).